A 107-amino-acid polypeptide reads, in one-letter code: uncharacterized protein (107 aa).

Over residues 80-98 (SIDNLKPTSHQNGTTNDTA) the composition is skewed to polar residues. The tract at residues 80–107 (SIDNLKPTSHQNGTTNDTATMDHLEKNE) is disordered.

This is an uncharacterized protein from Human spumaretrovirus (SFVcpz(hu)).